We begin with the raw amino-acid sequence, 194 residues long: WASH complex subunit 3 (194 aa).

N-acetylmethionine is present on methionine 1. Positions 46-74 form a coiled coil; it reads TVCEEKLADLSLRIQQIETTLNILDAKLS. Residues 98-123 show a composition bias toward polar residues; the sequence is THSEATSEQSQQNSLQDSGPQESEVT. 2 disordered regions span residues 98 to 125 and 158 to 194; these read THSE…VTPE and SEGL…SFSD.

Belongs to the CCDC53 family. As to quaternary structure, component of the WASH core complex also described as WASH regulatory complex (SHRC) composed of WASHC1, WASHC2, WASHC3, WASHC4 and WASHC5. The WASH core complex associates via WASHC2 with the F-actin-capping protein dimer (formed by CAPZA1, CAPZA2 or CAPZA3 and CAPZB) in a transient or substoichiometric manner which was initially described as WASH complex.

It localises to the early endosome. Its function is as follows. Acts as a component of the WASH core complex that functions as a nucleation-promoting factor (NPF) at the surface of endosomes, where it recruits and activates the Arp2/3 complex to induce actin polymerization, playing a key role in the fission of tubules that serve as transport intermediates during endosome sorting. The sequence is that of WASH complex subunit 3 from Bos taurus (Bovine).